We begin with the raw amino-acid sequence, 1201 residues long: ATPase with bromodomain protein abo2 (1201 aa).

Disordered regions lie at residues 1-223 and 305-324; these read MRRR…MRGP and CDSD…TSDV. Over residues 13–24 the composition is skewed to acidic residues; that stretch reads DDNEDNEEDDDY. Residues 29-38 show a composition bias toward basic and acidic residues; that stretch reads HSEKSEDHSN. The segment covering 66–89 has biased composition (polar residues); that stretch reads FSSLQKHLNTETPSFSVSIENPSK. The segment covering 129–146 has biased composition (acidic residues); sequence TDNNEDESTTFKDEEDDL. Basic residues predominate over residues 212 to 221; that stretch reads RRGRRKRKMR. Positions 312-323 are enriched in low complexity; the sequence is ELSSTSSEQTSD. 413-420 is an ATP binding site; sequence GPPGTGKT. A Bromo domain is found at 897–1026; that stretch reads KIKNKIQVKL…AHAELNVDEL (130 aa).

The protein belongs to the AAA ATPase family.

Its subcellular location is the nucleus. It carries out the reaction ATP + H2O = ADP + phosphate + H(+). Functionally, probable ATPase which may play a role in nucleosome organization. In Schizosaccharomyces pombe (strain 972 / ATCC 24843) (Fission yeast), this protein is ATPase with bromodomain protein abo2.